The primary structure comprises 136 residues: Acyl-CoA thioesterase YbgC (136 aa).

Asp18 is an active-site residue.

It belongs to the 4-hydroxybenzoyl-CoA thioesterase family.

Its function is as follows. Displays acyl-CoA thioesterase activity with short chain aliphatic acyl-CoA thioesters, such as propionyl-CoA and butyryl-CoA. Enzyme activity is relatively low, suggesting that the acyl-CoA thioesters used in the assays are not the physiological substrates. Has no detectable activity with 4-hydroxybenzoyl-CoA, lauroyl-CoA (C12:0), arachidoyl-CoA (C20:0) and arachidonoyl-CoA (C20:4). The protein is Acyl-CoA thioesterase YbgC (ybgC) of Haemophilus influenzae (strain ATCC 51907 / DSM 11121 / KW20 / Rd).